The sequence spans 907 residues: Protein translocase subunit SecA (907 aa).

Residues Gln-87, 105 to 109 (GEGKT), and Asp-512 contribute to the ATP site. The tract at residues 862–885 (AENQLDDGHSSDQNHSPMVRDERK) is disordered. The span at 867 to 885 (DDGHSSDQNHSPMVRDERK) shows a compositional bias: basic and acidic residues. Zn(2+) is bound by residues Cys-892, Cys-894, Cys-903, and His-904.

Belongs to the SecA family. Monomer and homodimer. Part of the essential Sec protein translocation apparatus which comprises SecA, SecYEG and auxiliary proteins SecDF-YajC and YidC. Requires Zn(2+) as cofactor.

It is found in the cell inner membrane. It localises to the cytoplasm. The enzyme catalyses ATP + H2O + cellular proteinSide 1 = ADP + phosphate + cellular proteinSide 2.. In terms of biological role, part of the Sec protein translocase complex. Interacts with the SecYEG preprotein conducting channel. Has a central role in coupling the hydrolysis of ATP to the transfer of proteins into and across the cell membrane, serving both as a receptor for the preprotein-SecB complex and as an ATP-driven molecular motor driving the stepwise translocation of polypeptide chains across the membrane. The protein is Protein translocase subunit SecA of Aliivibrio salmonicida (strain LFI1238) (Vibrio salmonicida (strain LFI1238)).